Here is a 378-residue protein sequence, read N- to C-terminus: Anhydro-N-acetylmuramic acid kinase (378 aa).

9-16 serves as a coordination point for ATP; that stretch reads GTSVDGID.

The protein belongs to the anhydro-N-acetylmuramic acid kinase family.

It catalyses the reaction 1,6-anhydro-N-acetyl-beta-muramate + ATP + H2O = N-acetyl-D-muramate 6-phosphate + ADP + H(+). The protein operates within amino-sugar metabolism; 1,6-anhydro-N-acetylmuramate degradation. It functions in the pathway cell wall biogenesis; peptidoglycan recycling. Functionally, catalyzes the specific phosphorylation of 1,6-anhydro-N-acetylmuramic acid (anhMurNAc) with the simultaneous cleavage of the 1,6-anhydro ring, generating MurNAc-6-P. Is required for the utilization of anhMurNAc either imported from the medium or derived from its own cell wall murein, and thus plays a role in cell wall recycling. In Microcystis aeruginosa (strain NIES-843 / IAM M-2473), this protein is Anhydro-N-acetylmuramic acid kinase.